We begin with the raw amino-acid sequence, 213 residues long: MKVKATKLRIKQRRKNKGLNISRLDIIRAEMDVVPSPGLPEKVNEKSKNIPLPEGINLLSSKEIIDLIQTHRHQLELYVTKFNPLTDFAGKIHAFRDQFKQLEENFEDLHEQKDKVQALLENCRILESKYVASWQDYHSEFSKKYGDIALKKKLEQNTKKLDEESSQLETTTRSIDSADDLDQFIKNYLDIRTQYHLRREKLATWDKQGNLKY.

The VPS37 C-terminal domain occupies S128–Y213.

Belongs to the VPS37 family. Component of the ESCRT-I complex (endosomal sorting complex required for transport I) which consists of STP22, VPS28, SRN2 and MVB12 in a 1:1:1:1 stoichiometry. Interacts with STP22 and MVB12.

The protein localises to the cytoplasm. It is found in the endosome. It localises to the late endosome membrane. In terms of biological role, component of the ESCRT-I complex, a regulator of vesicular trafficking process. Required for normal endocytic and biosynthetic traffic to the yeast vacuole. In Saccharomyces cerevisiae (strain ATCC 204508 / S288c) (Baker's yeast), this protein is Protein SRN2 (SRN2).